A 180-amino-acid polypeptide reads, in one-letter code: Cytokinin-beta-glucosidase 2 (180 aa).

Hydrolyzes cytokinin glucosides thus liberating free cytokinins. The protein is Cytokinin-beta-glucosidase 2 (ROLC2) of Linaria vulgaris (Toadflax).